The primary structure comprises 638 residues: Sorting nexin-41 (638 aa).

Residues Met1–Pro14 are compositionally biased toward low complexity. Positions Met1–Pro69 are disordered. Over residues Pro15 to Arg30 the composition is skewed to pro residues. The 118-residue stretch at Gly84–Trp201 folds into the PX domain. Residues Arg118, Ser120, Lys144, and Arg168 each contribute to the a 1,2-diacyl-sn-glycero-3-phospho-(1D-myo-inositol-3-phosphate) site. Disordered regions lie at residues Lys215–Pro239, Leu408–Ala432, and Pro545–Leu638. Low complexity predominate over residues Pro225 to Pro239. Over residues Glu423–Ala432 the composition is skewed to basic and acidic residues. Positions Gln552–Ser562 are enriched in low complexity. Positions Met585–Leu601 are enriched in basic and acidic residues.

It belongs to the sorting nexin family.

It is found in the endosome membrane. The protein localises to the endomembrane system. May be required for cytoplasm to vacuole transport (Cvt) and pexophagy. The chain is Sorting nexin-41 (SNX41) from Cryptococcus neoformans var. neoformans serotype D (strain B-3501A) (Filobasidiella neoformans).